The sequence spans 174 residues: Adenylate kinase (174 aa).

An NMP region spans residues 12–41 (STGDMLRAAIKAGTPLGLEAKKIIDEGGLV). AMP is bound by residues T13, R18, 39-41 (GLV), 67-70 (GFPR), and Q74. The tract at residues 104-141 (GRRVHLASGRTYHVTYNPPKVEGKDDVTGEDLIQRDDD) is LID. ATP contacts are provided by residues R105 and 114-115 (TY). Residues R138 and R149 each contribute to the AMP site.

This sequence belongs to the adenylate kinase family. Monomer.

The protein localises to the cytoplasm. It catalyses the reaction AMP + ATP = 2 ADP. It functions in the pathway purine metabolism; AMP biosynthesis via salvage pathway; AMP from ADP: step 1/1. Its function is as follows. Catalyzes the reversible transfer of the terminal phosphate group between ATP and AMP. Plays an important role in cellular energy homeostasis and in adenine nucleotide metabolism. The chain is Adenylate kinase from Neisseria lactamica.